Reading from the N-terminus, the 413-residue chain is NAD-dependent dihydropyrimidine dehydrogenase subunit PreT (413 aa).

Residue Glu-287 coordinates NAD(+).

The protein belongs to the NADH dehydrogenase family. In terms of assembly, heterotetramer of 2 PreA and 2 PreT subunits.

The enzyme catalyses 5,6-dihydrouracil + NAD(+) = uracil + NADH + H(+). It carries out the reaction 5,6-dihydrothymine + NAD(+) = thymine + NADH + H(+). Functionally, involved in pyrimidine base degradation. Catalyzes physiologically the reduction of uracil to 5,6-dihydrouracil (DHU) by using NADH as a specific cosubstrate. It also catalyzes the reverse reaction and the reduction of thymine to 5,6-dihydrothymine (DHT). This chain is NAD-dependent dihydropyrimidine dehydrogenase subunit PreT (preT), found in Salmonella typhimurium (strain LT2 / SGSC1412 / ATCC 700720).